The sequence spans 199 residues: Transmembrane protein 223 (199 aa).

At 1-43 (MVASVPLRNVSHLLSVLRSQNVPRYLQNGVPRDVLLFRHERGR) the chain is on the mitochondrial matrix side. The chain crosses the membrane as a helical span at residues 44 to 64 (FFAILGLFCAGQGIFWTSLAV). The Mitochondrial intermembrane portion of the chain corresponds to 65–94 (AALSRPLSRVPAEAPNRSYQDLRSALWRYG). A helical transmembrane segment spans residues 95–115 (LAVGCGTMGVLVLGAGLLYSL). The Mitochondrial matrix portion of the chain corresponds to 116–199 (RSVRSVMLLA…DNTVGAYRSL (84 aa)).

The protein belongs to the TMEM223 family. Associates with the mitochondrial ribosome.

It is found in the mitochondrion inner membrane. Functionally, mitochondrial ribosome-associated protein involved in the first steps of cytochrome c oxidase complex (complex IV) biogenesis. Stimulates the translation of MT-CO1 mRNA and is a constituent of early MT-CO1 assembly intermediates. The sequence is that of Transmembrane protein 223 from Mus musculus (Mouse).